The following is a 156-amino-acid chain: Ribosomal RNA large subunit methyltransferase H (156 aa).

Residues Leu-72, Gly-104, and 123–128 (FGAMVW) each bind S-adenosyl-L-methionine.

The protein belongs to the RNA methyltransferase RlmH family. As to quaternary structure, homodimer.

It localises to the cytoplasm. The enzyme catalyses pseudouridine(1915) in 23S rRNA + S-adenosyl-L-methionine = N(3)-methylpseudouridine(1915) in 23S rRNA + S-adenosyl-L-homocysteine + H(+). In terms of biological role, specifically methylates the pseudouridine at position 1915 (m3Psi1915) in 23S rRNA. The polypeptide is Ribosomal RNA large subunit methyltransferase H (Dinoroseobacter shibae (strain DSM 16493 / NCIMB 14021 / DFL 12)).